Consider the following 165-residue polypeptide: Chorismate pyruvate-lyase (165 aa).

Residues Met35, Arg77, Leu115, and Glu156 each contribute to the substrate site.

It belongs to the UbiC family. Monomer.

It is found in the cytoplasm. The enzyme catalyses chorismate = 4-hydroxybenzoate + pyruvate. It participates in cofactor biosynthesis; ubiquinone biosynthesis. Removes the pyruvyl group from chorismate, with concomitant aromatization of the ring, to provide 4-hydroxybenzoate (4HB) for the ubiquinone pathway. In Salmonella schwarzengrund (strain CVM19633), this protein is Chorismate pyruvate-lyase.